Here is a 433-residue protein sequence, read N- to C-terminus: Voltage-gated potassium channel regulatory subunit KCNG3 (433 aa).

Over 1–165 (MTFGRGGAAS…RTFEEPTSSL (165 aa)) the chain is Cytoplasmic. A helical transmembrane segment spans residues 166 to 187 (AAQILASVSVVFVIVSMVVLCA). Over 188 to 217 (STLPDWRAAVADNRSLDDRSRYSASPGREP) the chain is Extracellular. The helical transmembrane segment at 218–239 (SGIIEAICIGWFTAECIVRFIV) threads the bilayer. The Cytoplasmic portion of the chain corresponds to 240–250 (SKNKCEFVKRP). The helical transmembrane segment at 251–271 (LNIIDLLAITPYYISVLMTVF) threads the bilayer. The Extracellular portion of the chain corresponds to 272 to 281 (TGENSQLQRA). A helical; Voltage-sensor membrane pass occupies residues 282-302 (GVTLRVLRMMRIFWVIKLARH). Residues 303 to 317 (FIGLQTLGLTLKRCY) lie on the Cytoplasmic side of the membrane. A helical membrane pass occupies residues 318-339 (REMAMLLVFICVAMAIFSALSQ). Residues 340–357 (LLEHGLDLETSNKDFASI) lie on the Extracellular side of the membrane. An intramembrane region (helical) is located at residues 358–369 (PAACWWVIISMT). The short motif at 370 to 375 (TVGYGD) is the Selectivity filter element. Residues 370-377 (TVGYGDMY) lie within the membrane without spanning it. Residues 378 to 384 (PITVPGR) are Extracellular-facing. Residues 385–413 (ILGGVCVVSGIVLLALPITFIYHSFVQCY) form a helical membrane-spanning segment. Residues 414-433 (HELKFRSARYSRSLSAEFLN) are Cytoplasmic-facing.

The protein belongs to the potassium channel family. G (TC 1.A.1.2) subfamily. Kv6.3/KCNG3 sub-subfamily. Heterotetramer with KCNB1. Does not form homomultimers.

It is found in the cell membrane. The protein localises to the cytoplasm. In terms of biological role, regulatory subunit of the voltage-gated potassium (Kv) channel which, when coassembled with KCNB1, modulates the kinetics parameters of the heterotetrameric channel namely the inactivation and deactivation rate. Potassium channel subunit that does not form functional channels by itself. Reduces the deactivation rate. Moderately acceleratee activation. The protein is Voltage-gated potassium channel regulatory subunit KCNG3 of Mus musculus (Mouse).